Reading from the N-terminus, the 333-residue chain is Fructose-1,6-bisphosphatase class 1 1 (333 aa).

The Mg(2+) site is built by glutamate 81, aspartate 100, leucine 102, and aspartate 103. Substrate contacts are provided by residues 103-106 (DGSS) and asparagine 191. Mg(2+) is bound at residue glutamate 263.

This sequence belongs to the FBPase class 1 family. Homotetramer. Mg(2+) serves as cofactor.

The protein localises to the cytoplasm. It catalyses the reaction beta-D-fructose 1,6-bisphosphate + H2O = beta-D-fructose 6-phosphate + phosphate. It participates in carbohydrate biosynthesis; Calvin cycle. The sequence is that of Fructose-1,6-bisphosphatase class 1 1 from Cereibacter sphaeroides (strain ATCC 17029 / ATH 2.4.9) (Rhodobacter sphaeroides).